Consider the following 396-residue polypeptide: Phosphoglycerate kinase (396 aa).

Substrate-binding positions include 21–23 (DLN), arginine 36, 59–62 (HLGR), arginine 113, and arginine 146. ATP contacts are provided by residues lysine 197, glutamate 319, and 345 to 348 (GGDT).

The protein belongs to the phosphoglycerate kinase family. As to quaternary structure, monomer.

It is found in the cytoplasm. It carries out the reaction (2R)-3-phosphoglycerate + ATP = (2R)-3-phospho-glyceroyl phosphate + ADP. The protein operates within carbohydrate degradation; glycolysis; pyruvate from D-glyceraldehyde 3-phosphate: step 2/5. This is Phosphoglycerate kinase from Legionella pneumophila (strain Corby).